The sequence spans 131 residues: Profilin-1 (131 aa).

The protein belongs to the profilin family. Occurs in many kinds of cells as a complex with monomeric actin in a 1:1 ratio.

The protein resides in the cytoplasm. Its subcellular location is the cytoskeleton. Its function is as follows. Binds to actin and affects the structure of the cytoskeleton. At high concentrations, profilin prevents the polymerization of actin, whereas it enhances it at low concentrations. By binding to PIP2, it inhibits the formation of IP3 and DG. This Hevea brasiliensis (Para rubber tree) protein is Profilin-1.